A 99-amino-acid chain; its full sequence is Small ribosomal subunit protein uS17 (99 aa).

This sequence belongs to the universal ribosomal protein uS17 family. In terms of assembly, part of the 30S ribosomal subunit.

In terms of biological role, one of the primary rRNA binding proteins, it binds specifically to the 5'-end of 16S ribosomal RNA. The sequence is that of Small ribosomal subunit protein uS17 from Thermosipho africanus (strain TCF52B).